Consider the following 241-residue polypeptide: Uridylate kinase (241 aa).

Residue 12-15 (KISG) participates in ATP binding. Residues 20–25 (GDKGNG) are involved in allosteric activation by GTP. Gly-54 lines the UMP pocket. Gly-55 and Arg-59 together coordinate ATP. UMP-binding positions include Asp-74 and 135–142 (TGNPYFST). Positions 163, 169, and 172 each coordinate ATP.

This sequence belongs to the UMP kinase family. Homohexamer.

It localises to the cytoplasm. The enzyme catalyses UMP + ATP = UDP + ADP. It participates in pyrimidine metabolism; CTP biosynthesis via de novo pathway; UDP from UMP (UMPK route): step 1/1. Its activity is regulated as follows. Allosterically activated by GTP. Inhibited by UTP. Catalyzes the reversible phosphorylation of UMP to UDP. In Lactobacillus acidophilus (strain ATCC 700396 / NCK56 / N2 / NCFM), this protein is Uridylate kinase.